Here is a 305-residue protein sequence, read N- to C-terminus: Glycine--tRNA ligase alpha subunit (305 aa).

Belongs to the class-II aminoacyl-tRNA synthetase family. As to quaternary structure, tetramer of two alpha and two beta subunits.

The protein resides in the cytoplasm. The catalysed reaction is tRNA(Gly) + glycine + ATP = glycyl-tRNA(Gly) + AMP + diphosphate. This chain is Glycine--tRNA ligase alpha subunit, found in Vibrio vulnificus (strain CMCP6).